Reading from the N-terminus, the 231-residue chain is Probable transglycosylase SceD (231 aa).

A signal peptide spans 1–27 (MKKTLLASSLAVGLGIVAGNAGHEAHA). Over residues 103-116 (APSAVQANQVQSQE) the composition is skewed to polar residues. The tract at residues 103–153 (APSAVQANQVQSQEVEAPQNAQTQQPQASTSNNSQVTATPTESKSSEGSSV) is disordered. Positions 119 to 137 (APQNAQTQQPQASTSNNSQ) are enriched in low complexity. Over residues 138-153 (VTATPTESKSSEGSSV) the composition is skewed to polar residues.

The protein belongs to the transglycosylase family. SceD subfamily.

Its subcellular location is the secreted. Is able to cleave peptidoglycan and affects clumping and separation of bacterial cells. This Staphylococcus aureus (strain COL) protein is Probable transglycosylase SceD (sceD).